We begin with the raw amino-acid sequence, 759 residues long: Cullin-4A (759 aa).

A Glycyl lysine isopeptide (Lys-Gly) (interchain with G-Cter in SUMO2) cross-link involves residue Lys8. Ser10 is subject to Phosphoserine. A Glycyl lysine isopeptide (Lys-Gly) (interchain with G-Cter in ubiquitin) cross-link involves residue Lys33. Residues 691-751 (DRQYQIDAAI…RDYMERDKDN (61 aa)) enclose the Cullin neddylation domain. Lys705 participates in a covalent cross-link: Glycyl lysine isopeptide (Lys-Gly) (interchain with G-Cter in NEDD8).

This sequence belongs to the cullin family. As to quaternary structure, can self-associate. Component of multiple DCX (DDB1-CUL4-X-box) E3 ubiquitin-protein ligase complexes that seem to consist of DDB1, CUL4A or CUL4B, RBX1 and a variable substrate recognition component which seems to belong to a protein family described as DCAF (Ddb1- and Cul4-associated factor) or CDW (CUL4-DDB1-associated WD40-repeat) proteins. Component of the CSA complex (DCX(ERCC8) complex) containing ERCC8, RBX1, DDB1 and CUL4A; the CSA complex interacts with RNA polymerase II; upon UV irradiation it interacts with the COP9 signalosome and preferentially with the hyperphosphorylated form of RNA polymerase II. Component of the DCX(DET1-COP1) complex with the substrate recognition component DET1 and COP1. Component of the DCX(DDB2) complex with the substrate recognition component DDB2. Component of the DCX(DTL) complex with the putative substrate recognition component DTL. Component of DCX complexes part of the DesCEND (destruction via C-end degrons) pathway, which contain either TRPC4AP or DCAF12 as substrate-recognition component. Component of the DCX(AMBRA1) complex with the substrate recognition component AMBRA1. Interacts with DDB1, RBX1, RNF7, CDT1, TIP120A/CAND1, SKP2, CDKN1B, MDM2, TP53 and HOXA9. Interacts with DDB2; the interactions with DDB2 and CAND1 are mutually exclusive. Interacts with DCAF1, DTL, DDA1, DCAF6, DCAF4, DCAF16, DCAF17, DET1, WDTC1, DCAF5, DCAF11, WDR24A, COP1, PAFAH1B1, ERCC8, GRWD1, FBXW5, RBBP7, GNB2, WSB1, WSB2, NUP43, PWP1, FBXW8, ATG16L1, KATNB1, RBBP4, RBBP5, LRWD1 and DCAF8. May interact with WDR26, WDR51B, SNRNP40, WDR61, WDR76, WDR5. Interacts (when neddylated) with ARIH1; leading to activate the E3 ligase activity of ARIH1. The DDB1-CUL4A complex interacts with CRY1. Interacts (unneddylated form) with DCUN1D1, DCUN1D2, DCUN1D3, DCUN1D4 and DCUN1D5; these interactions promote the cullin neddylation. In terms of assembly, (Microbial infection) Interacts with Epstein-Barr virus BPLF1. Post-translationally, neddylated; required for activity of cullin-RING-based E3 ubiquitin-protein ligase complexes. Deneddylated via its interaction with the COP9 signalosome (CSN) complex. In terms of processing, (Microbial infection) Deneddylated by Epstein-Barr virus BPLF1 leading to a S-phase-like environment that is required for efficient replication of the viral genome.

It functions in the pathway protein modification; protein ubiquitination. In terms of biological role, core component of multiple cullin-RING-based E3 ubiquitin-protein ligase complexes which mediate the ubiquitination of target proteins. As a scaffold protein may contribute to catalysis through positioning of the substrate and the ubiquitin-conjugating enzyme. The E3 ubiquitin-protein ligase activity of the complex is dependent on the neddylation of the cullin subunit and is inhibited by the association of the deneddylated cullin subunit with TIP120A/CAND1. The functional specificity of the E3 ubiquitin-protein ligase complex depends on the variable substrate recognition component. DCX(DET1-COP1) directs ubiquitination of JUN. DCX(DDB2) directs ubiquitination of XPC. DCX(DDB2) ubiquitinates histones H3-H4 and is required for efficient histone deposition during replication-coupled (H3.1) and replication-independent (H3.3) nucleosome assembly, probably by facilitating the transfer of H3 from ASF1A/ASF1B to other chaperones involved in histone deposition. DCX(DTL) plays a role in PCNA-dependent polyubiquitination of CDT1 and MDM2-dependent ubiquitination of p53/TP53 in response to radiation-induced DNA damage and during DNA replication. DCX(DTL) directs autoubiquitination of DTL. In association with DDB1 and SKP2 probably is involved in ubiquitination of CDKN1B/p27kip. Is involved in ubiquitination of HOXA9. The DDB1-CUL4A-DTL E3 ligase complex regulates the circadian clock function by mediating the ubiquitination and degradation of CRY1. The DCX(ERCC8) complex (also named CSA complex) plays a role in transcription-coupled repair (TCR). A number of DCX complexes (containing either TRPC4AP or DCAF12 as substrate-recognition component) are part of the DesCEND (destruction via C-end degrons) pathway, which recognizes a C-degron located at the extreme C terminus of target proteins, leading to their ubiquitination and degradation. The DCX(AMBRA1) complex is a master regulator of the transition from G1 to S cell phase by mediating ubiquitination of phosphorylated cyclin-D (CCND1, CCND2 and CCND3). The DCX(AMBRA1) complex also acts as a regulator of Cul5-RING (CRL5) E3 ubiquitin-protein ligase complexes by mediating ubiquitination and degradation of Elongin-C (ELOC) component of CRL5 complexes. With CUL4B, contributes to ribosome biogenesis. This Homo sapiens (Human) protein is Cullin-4A.